A 427-amino-acid polypeptide reads, in one-letter code: Endothelin-1 receptor (427 aa).

A signal peptide spans 1–20 (MSIFCLAAYFWLTMVGGVMA). Topologically, residues 21-80 (DNPERYSANLSSHMEDFTPFPGTEINFLGTTHRPPNLALPSNGSMHGYCPQQTKITTAFK) are extracellular. N-linked (GlcNAc...) asparagine glycosylation is found at Asn29 and Asn62. The chain crosses the membrane as a helical span at residues 81-102 (YINTVISCTIFIVGMVGNATLL). Residues 103 to 112 (RIIYQNKCMR) lie on the Cytoplasmic side of the membrane. Residues 113-132 (NGPNALIASLALGDLIYVVI) traverse the membrane as a helical segment. The Extracellular segment spans residues 133–159 (DLPINVFKLLAGRWPFDHNDFGVFLCK). A disulfide bridge connects residues Cys158 and Cys239. A helical membrane pass occupies residues 160–181 (LFPFLQKSSVGITVLNLCALSV). The Cytoplasmic portion of the chain corresponds to 182–205 (DRYRAVASWSRVQGIGIPLITAIE). The helical transmembrane segment at 206-229 (IVSIWILSFILAIPEAIGFVMVPF) threads the bilayer. The Extracellular portion of the chain corresponds to 230-256 (EYKGELHRTCMLNATSKFMEFYQDVKD). An N-linked (GlcNAc...) asparagine glycan is attached at Asn242. Residues 257–278 (WWLFGFYFCMPLVCTAIFYTLM) traverse the membrane as a helical segment. The Cytoplasmic portion of the chain corresponds to 279–306 (TCEMLNRRNGSLRIALSEHLKQRREVAK). Residues 307 to 328 (TVFCLVVIFALCWFPLHLSRIL) traverse the membrane as a helical segment. The Extracellular portion of the chain corresponds to 329–347 (KKTVYDEMDKNRCELLSFL). Residues 348–372 (LLMDYIGINLATMNSCINPIALYFV) traverse the membrane as a helical segment. Topologically, residues 373–427 (SKKFKNCFQSCLCCCCHQSKSLMTSVPMNGTSIQWKNQEQNNHNTERSSHKDSMN) are cytoplasmic. Residues 408-427 (KNQEQNNHNTERSSHKDSMN) form a disordered region. A compositionally biased stretch (basic and acidic residues) spans 416–427 (NTERSSHKDSMN). A Phosphoserine modification is found at Ser425.

This sequence belongs to the G-protein coupled receptor 1 family. Endothelin receptor subfamily. EDNRA sub-subfamily. In terms of assembly, interacts with HDAC7 and KAT5.

Its subcellular location is the cell membrane. Functionally, receptor for endothelin-1. Mediates its action by association with G proteins that activate a phosphatidylinositol-calcium second messenger system. The rank order of binding affinities for ET-A is: ET1 &gt; ET2 &gt;&gt; ET3. The protein is Endothelin-1 receptor of Mus musculus (Mouse).